The following is a 579-amino-acid chain: Folliculin (579 aa).

The tract at residues 32-82 (GAGSGDSPGQVEQAEEEEGGIQMSSRVRAHSPAEGASTDSSSPGPKKSDMC) is disordered. Residues serine 62 and serine 73 each carry the phosphoserine modification. The uDENN FLCN/SMCR8-type domain occupies 86–242 (RSLAVGHPGY…RNGNAARSLT (157 aa)). Residues 287 to 310 (EKLADLEEESESWDNSEAEEEEKA) adopt a coiled-coil conformation. Residues 294 to 308 (EESESWDNSEAEEEE) show a composition bias toward acidic residues. The tract at residues 294 to 320 (EESESWDNSEAEEEEKAPATAEGAEGR) is disordered. Phosphoserine is present on residues serine 302, serine 406, serine 537, serine 542, and serine 571. A cDENN FLCN/SMCR8-type domain is found at 339–491 (QPPKLSVFKS…ILNKMEAALT (153 aa)). Residues 493–558 (QNLSVDVVDQ…LLKFWMTGLS (66 aa)) enclose the dDENN FLCN/SMCR8-type domain.

Belongs to the folliculin family. As to quaternary structure, interacts (via C-terminus) with FNIP1 or FNIP2 (via C-terminus). Component of the lysosomal folliculin complex (LFC), composed of FLCN, FNIP1 (or FNIP2), RagA/RRAGA or RagB/RRAGB GDP-bound, RagC/RRAGC or RagD/RRAGD GTP-bound, and Ragulator. Interaction with FNIP1 or FNIP2 mediates indirect interaction with the PRKAA1, PRKAB1 and PRKAG1 subunits of 5'-AMP-activated protein kinase (AMPK). Interacts with HSP90AA1 in the presence of FNIP1. Interacts with HSP70, STUB1, CDC37, AHSA1, CCT2, STIP1, PTGES3 and PPP5C. Interacts with GABARAP; interaction takes place in the presence of FNIP1 and/or FNIP2. Interacts with RILP; the interaction is direct and promotes association between RILP and RAB34. Interacts with KIF3A and KIF3B. Interacts with lactate dehydrogenase LDHA, but not LDHB; the interaction is direct, may preferentially bind LDHA dimers rather than tetramers, and regulates LDHA activity, acting as an uncompetitive inhibitor. Phosphorylation by ULK1 modulates the interaction with GABARAP and is required to regulate autophagy. As to expression, expressed in kidney.

It is found in the lysosome membrane. The protein resides in the cytoplasm. The protein localises to the cytosol. It localises to the cell projection. Its subcellular location is the cilium. It is found in the cytoskeleton. The protein resides in the microtubule organizing center. The protein localises to the centrosome. It localises to the spindle. Its subcellular location is the nucleus. GTPase-activating activity is inhibited in the folliculin complex (LFC), which stabilizes the GDP-bound state of RagA/RRAGA (or RagB/RRAGB), because Arg-164 is located far from the RagC/RRAGC or RagD/RRAGD nucleotide pocket. Disassembly of the LFC complex upon amino acid restimulation liberates the GTPase-activating activity. In terms of biological role, multi-functional protein, involved in both the cellular response to amino acid availability and in the regulation of glycolysis. GTPase-activating protein that plays a key role in the cellular response to amino acid availability through regulation of the non-canonical mTORC1 signaling cascade controlling the MiT/TFE factors TFEB and TFE3. Activates mTORC1 by acting as a GTPase-activating protein: specifically stimulates GTP hydrolysis by RagC/RRAGC or RagD/RRAGD, promoting the conversion to the GDP-bound state of RagC/RRAGC or RagD/RRAGD, and thereby activating the kinase activity of mTORC1. The GTPase-activating activity is inhibited during starvation and activated in presence of nutrients. Acts as a key component for non-canonical mTORC1-dependent control of the MiT/TFE factors TFEB and TFE3, while it is not involved in mTORC1-dependent phosphorylation of canonical RPS6KB1/S6K1 and EIF4EBP1/4E-BP1. In low-amino acid conditions, the lysosomal folliculin complex (LFC) is formed on the membrane of lysosomes, which inhibits the GTPase-activating activity of FLCN, inactivates mTORC1 and maximizes nuclear translocation of TFEB and TFE3. Upon amino acid restimulation, RagA/RRAGA (or RagB/RRAGB) nucleotide exchange promotes disassembly of the LFC complex and liberates the GTPase-activating activity of FLCN, leading to activation of mTORC1 and subsequent cytoplasmic retention of TFEB and TFE3. Indirectly acts as a positive regulator of Wnt signaling by promoting mTOR-dependent cytoplasmic retention of MiT/TFE factor TFE3. Required for the exit of hematopoietic stem cell from pluripotency by promoting mTOR-dependent cytoplasmic retention of TFE3, thereby increasing Wnt signaling. Involved in the control of embryonic stem cells differentiation; together with LAMTOR1 it is necessary to recruit and activate RagC/RRAGC and RagD/RRAGD at the lysosomes, and to induce exit of embryonic stem cells from pluripotency via non-canonical, mTOR-independent TFE3 inactivation. Acts as an inhibitor of browning of adipose tissue by regulating mTOR-dependent cytoplasmic retention of TFE3. In response to flow stress, regulates STK11/LKB1 accumulation and mTORC1 activation through primary cilia: may act by recruiting STK11/LKB1 to primary cilia for activation of AMPK resided at basal bodies, causing mTORC1 down-regulation. Together with FNIP1 and/or FNIP2, regulates autophagy: following phosphorylation by ULK1, interacts with GABARAP and promotes autophagy. Required for starvation-induced perinuclear clustering of lysosomes by promoting association of RILP with its effector RAB34. Regulates glycolysis by binding to lactate dehydrogenase LDHA, acting as an uncompetitive inhibitor. The protein is Folliculin of Rattus norvegicus (Rat).